The following is a 154-amino-acid chain: MSEKNQLQVEAIRHGSVIDHVPAGQGIKILKLFQLIETQERITVGFNLKSGALGKKDLIKIENTRLTEQQANQLALFAPKATVNIIEDFAVVKKHQLELPEFIAGVFHCPNSNCISHNEPVDSYFRVREVKGVVRMKCKYCEKSFTQDIVSERY.

The Zn(2+) site is built by Cys109, Cys114, Cys138, and Cys141.

The protein belongs to the PyrI family. Contains catalytic and regulatory chains. Zn(2+) is required as a cofactor.

Its function is as follows. Involved in allosteric regulation of aspartate carbamoyltransferase. This chain is Aspartate carbamoyltransferase regulatory chain, found in Aeromonas hydrophila subsp. hydrophila (strain ATCC 7966 / DSM 30187 / BCRC 13018 / CCUG 14551 / JCM 1027 / KCTC 2358 / NCIMB 9240 / NCTC 8049).